The chain runs to 278 residues: MNPYIVLLKPRVIWLLILSSVVGYIYAAQTVDWSKLIALIAVATLAVGGSAAFNHYWERDIDAAMSRTARRPLPAGLIPEFNALVYSLALSAAGITLSFYLLGPLPGLFVALGWFFYAVVYTIWLKRKTWLNILGGGFAGNATFLGGYALGKGTVDLPAVLISFAIYLWIPSHIWALAYKYRHDYRKAGVPMLPAIIDEKKSVVIISILNIASAVYILWLYLAFGQSLLGLALVFAGVAGTVATSILALKEKSDRAMWKMYKASSPILTLFLLALVFS.

Helical transmembrane passes span 12 to 32, 33 to 53, 83 to 103, 105 to 125, 130 to 150, 157 to 177, 204 to 224, 228 to 248, and 257 to 277; these read VIWL…QTVD, WSKL…SAAF, ALVY…YLLG, LPGL…TIWL, WLNI…GYAL, LPAV…IWAL, VIIS…YLAF, LLGL…SILA, and MWKM…ALVF.

This sequence belongs to the UbiA prenyltransferase family. Protoheme IX farnesyltransferase subfamily.

The protein resides in the cell membrane. The enzyme catalyses heme b + (2E,6E)-farnesyl diphosphate + H2O = Fe(II)-heme o + diphosphate. It functions in the pathway porphyrin-containing compound metabolism; heme O biosynthesis; heme O from protoheme: step 1/1. Converts heme B (protoheme IX) to heme O by substitution of the vinyl group on carbon 2 of heme B porphyrin ring with a hydroxyethyl farnesyl side group. The polypeptide is Protoheme IX farnesyltransferase (Pyrobaculum islandicum (strain DSM 4184 / JCM 9189 / GEO3)).